The chain runs to 100 residues: Nucleoid-associated protein HPSH_00175 (100 aa).

It belongs to the YbaB/EbfC family. Homodimer.

The protein localises to the cytoplasm. The protein resides in the nucleoid. Functionally, binds to DNA and alters its conformation. May be involved in regulation of gene expression, nucleoid organization and DNA protection. The polypeptide is Nucleoid-associated protein HPSH_00175 (Helicobacter pylori (strain Shi470)).